Reading from the N-terminus, the 315-residue chain is Methionyl-tRNA formyltransferase (315 aa).

110–113 (SLLP) is a binding site for (6S)-5,6,7,8-tetrahydrofolate.

Belongs to the Fmt family.

The enzyme catalyses L-methionyl-tRNA(fMet) + (6R)-10-formyltetrahydrofolate = N-formyl-L-methionyl-tRNA(fMet) + (6S)-5,6,7,8-tetrahydrofolate + H(+). Attaches a formyl group to the free amino group of methionyl-tRNA(fMet). The formyl group appears to play a dual role in the initiator identity of N-formylmethionyl-tRNA by promoting its recognition by IF2 and preventing the misappropriation of this tRNA by the elongation apparatus. The sequence is that of Methionyl-tRNA formyltransferase from Cutibacterium acnes (strain DSM 16379 / KPA171202) (Propionibacterium acnes).